The sequence spans 433 residues: Steroid hormone receptor ERR2 (433 aa).

The segment at 1-38 (MSSEDRHLGSSCGSFIKTEPSSPSSGIDALSHHSPSGS) is disordered. The tract at residues 93–211 (YMLNAIPKRL…SPPAKKPLTK (119 aa)) is interaction with NANOG. The nuclear receptor DNA-binding region spans 100-186 (KRLCLVCGDI…RVRGGRQKYK (87 aa)). 2 consecutive NR C4-type zinc fingers follow at residues 103–123 (CLVC…CEAC) and 139–163 (CPAT…FMKC). Residues 203-433 (PPAKKPLTKI…LFLEMLEAKV (231 aa)) are essential for ESRRB transcriptional activity and interaction with NCOA3. An NR LBD domain is found at 208-432 (PLTKIVSNLL…KLFLEMLEAK (225 aa)).

The protein belongs to the nuclear hormone receptor family. NR3 subfamily. In terms of assembly, binds DNA as a monomer. Interacts with NR0B1; represses ESRRB activity at the GATA6 promoter. Interacts with NANOG; reciprocally modulates their transcriptional activities and activates POU5F1 expression. Interacts with NCOA3; mediates the interaction between ESRRB and RNA polymerase II complexes and allows NCOA3 corecruitment to ESRRB, KLF4, NANOG, and SOX2 enhancer regions to trigger ESRRB-dependent gene activation involved in self-renewal and pluripotency. Interacts with KDM1A; co-occupes the core set of ESRRB targets including ELF5 and EOMES. Interacts with the multiprotein complex Integrator, at least composed of INTS1, INTS2, INTS3, INTS4, INTS5, INTS6, INTS7, INTS8, INTS9/RC74, INTS10, INTS11/CPSF3L and INTS12; ESRRB is probably not a core component of the integrator complex and associates to integrator via its interaction with INTS1 and INTS9; attracts the transcriptional machinery. Interacts with JARID2. Interacts with POU5F1; recruits ESRRB near the POU5F1-SOX2 element in the NANOG proximal promoter leading to activation of NANOG expression; the interaction is DNA independent. Post-translationally, acetylated by PCAF/KAT2 (in vitro). In terms of tissue distribution, highly expressed in undifferentiated ESCs. Expressed in immature horizontal cells and in rod photoreceptors at intermediate and late stages of differentiation. Expressed in endolymph-producing epithelial cells.

The protein localises to the nucleus. The protein resides in the cytoplasm. It is found in the chromosome. Functionally, transcription factor that binds a canonical ESRRB recognition (ERRE) sequence 5'TCAAGGTCA-3' localized on promoter and enhancer of targets genes regulating their expression or their transcriptional activity. Plays a role, in a LIF-independent manner, in maintainance of self-renewal and pluripotency of embryonic and trophoblast stem cells through different signaling pathways including FGF signaling pathway and Wnt signaling pathways. Involved in morula development (2-16 cells embryos) by acting as a regulator at the 8-cell stage. Upon FGF signaling pathway activation, interacts with KDM1A by directly binding to enhancer site of ELF5 and EOMES and activating their transcription leading to self-renewal of trophoblast stem cells. Also regulates expression of multiple rod-specific genes and is required for survival of this cell type. Plays a role as transcription factor activator of GATA6, NR0B1, POU5F1 and PERM1. Plays a role as transcription factor repressor of NFE2L2 transcriptional activity and ESR1 transcriptional activity. During mitosis remains bound to a subset of interphase target genes, including pluripotency regulators, through the canonical ESRRB recognition (ERRE) sequence, leading to their transcriptional activation in early G1 phase. Can coassemble on structured DNA elements with other transcription factors like SOX2, POU5F1, KDM1A and NCOA3 to trigger ESRRB-dependent gene activation. This mechanism, in the case of SOX2 corecruitment prevents the embryonic stem cells (ESCs) to epiblast stem cells (EpiSC) transition through positive regulation of NR0B1 that inhibits the EpiSC transcriptional program. Also plays a role inner ear development by controlling expression of ion channels and transporters and in early placentation. The chain is Steroid hormone receptor ERR2 from Mus musculus (Mouse).